Reading from the N-terminus, the 252-residue chain is Triosephosphate isomerase (252 aa).

Residue 10–12 (NWK) participates in substrate binding. The active-site Electrophile is histidine 96. The active-site Proton acceptor is glutamate 168. Substrate-binding positions include glycine 174, serine 214, and 235 to 236 (GG).

This sequence belongs to the triosephosphate isomerase family. As to quaternary structure, homodimer.

Its subcellular location is the cytoplasm. The enzyme catalyses D-glyceraldehyde 3-phosphate = dihydroxyacetone phosphate. The protein operates within carbohydrate biosynthesis; gluconeogenesis. It functions in the pathway carbohydrate degradation; glycolysis; D-glyceraldehyde 3-phosphate from glycerone phosphate: step 1/1. In terms of biological role, involved in the gluconeogenesis. Catalyzes stereospecifically the conversion of dihydroxyacetone phosphate (DHAP) to D-glyceraldehyde-3-phosphate (G3P). The sequence is that of Triosephosphate isomerase from Streptococcus pyogenes serotype M2 (strain MGAS10270).